Reading from the N-terminus, the 530-residue chain is Glucose-6-phosphate isomerase (530 aa).

Catalysis depends on glutamate 322, which acts as the Proton donor. Catalysis depends on residues histidine 351 and lysine 455.

This sequence belongs to the GPI family.

The protein resides in the cytoplasm. The enzyme catalyses alpha-D-glucose 6-phosphate = beta-D-fructose 6-phosphate. Its pathway is carbohydrate biosynthesis; gluconeogenesis. It participates in carbohydrate degradation; glycolysis; D-glyceraldehyde 3-phosphate and glycerone phosphate from D-glucose: step 2/4. In terms of biological role, catalyzes the reversible isomerization of glucose-6-phosphate to fructose-6-phosphate. This is Glucose-6-phosphate isomerase from Geobacter sp. (strain M21).